A 251-amino-acid polypeptide reads, in one-letter code: Ubiquinone/menaquinone biosynthesis C-methyltransferase UbiE (251 aa).

Residues threonine 74, aspartate 95, 123 to 124, and serine 140 contribute to the S-adenosyl-L-methionine site; that span reads NA.

The protein belongs to the class I-like SAM-binding methyltransferase superfamily. MenG/UbiE family.

It carries out the reaction a 2-demethylmenaquinol + S-adenosyl-L-methionine = a menaquinol + S-adenosyl-L-homocysteine + H(+). It catalyses the reaction a 2-methoxy-6-(all-trans-polyprenyl)benzene-1,4-diol + S-adenosyl-L-methionine = a 5-methoxy-2-methyl-3-(all-trans-polyprenyl)benzene-1,4-diol + S-adenosyl-L-homocysteine + H(+). The protein operates within quinol/quinone metabolism; menaquinone biosynthesis; menaquinol from 1,4-dihydroxy-2-naphthoate: step 2/2. It participates in cofactor biosynthesis; ubiquinone biosynthesis. Functionally, methyltransferase required for the conversion of demethylmenaquinol (DMKH2) to menaquinol (MKH2) and the conversion of 2-polyprenyl-6-methoxy-1,4-benzoquinol (DDMQH2) to 2-polyprenyl-3-methyl-6-methoxy-1,4-benzoquinol (DMQH2). This Pectobacterium atrosepticum (strain SCRI 1043 / ATCC BAA-672) (Erwinia carotovora subsp. atroseptica) protein is Ubiquinone/menaquinone biosynthesis C-methyltransferase UbiE.